The primary structure comprises 221 residues: Histone H1.3 (221 aa).

Over residues 1-17 (MSETAPLAPTIPAPAEK) the composition is skewed to low complexity. Residues 1-43 (MSETAPLAPTIPAPAEKTPVKKKAKKAGATAGKRKASGPPVSE) form a disordered region. N-acetylserine is present on serine 2. Residue serine 2 is modified to Phosphoserine. Lysine 17 is modified (N6-acetyllysine). A Phosphothreonine modification is found at threonine 18. Over residues 20-36 (VKKKAKKAGATAGKRKA) the composition is skewed to basic residues. N6-(beta-hydroxybutyryl)lysine is present on residues lysine 35, lysine 47, and lysine 53. The H15 domain maps to 37–110 (SGPPVSELIT…GASGSFKLNK (74 aa)). Arginine 55 carries the post-translational modification Citrulline. Residues lysine 65, lysine 76, lysine 86, and lysine 91 each carry the N6-(beta-hydroxybutyryl)lysine modification. The tract at residues 90–221 (SKGTLVQTKG…KAKKAAPKKK (132 aa)) is disordered. Serine 105 is modified (phosphoserine; by PKC). Lysine 107 carries the N6-(beta-hydroxybutyryl)lysine modification. Basic residues-rich tracts occupy residues 120–141 (KAKKAGAAKPRKPAGAAKKPKK), 150–161 (KSIKKTPKKVKK), and 170–179 (KVAKSAKKVK). An N6-(beta-hydroxybutyryl)lysine modification is found at lysine 170. Over residues 180-193 (TPQPKKAAKSPAKA) the composition is skewed to low complexity. Basic residues predominate over residues 194 to 221 (KAPKPKAAKPKSGKPKVTKAKKAAPKKK).

This sequence belongs to the histone H1/H5 family. Post-translationally, H1 histones are progressively phosphorylated during the cell cycle, becoming maximally phosphorylated during late G2 phase and M phase, and being dephosphorylated sharply thereafter. In terms of processing, citrullination at Arg-55 (H1R54ci) by PADI4 takes place within the DNA-binding site of H1 and results in its displacement from chromatin and global chromatin decondensation, thereby promoting pluripotency and stem cell maintenance.

It localises to the nucleus. Its subcellular location is the chromosome. Histone H1 protein binds to linker DNA between nucleosomes forming the macromolecular structure known as the chromatin fiber. Histones H1 are necessary for the condensation of nucleosome chains into higher-order structured fibers. Also acts as a regulator of individual gene transcription through chromatin remodeling, nucleosome spacing and DNA methylation. This is Histone H1.3 from Homo sapiens (Human).